The primary structure comprises 134 residues: Small ribosomal subunit protein uS12 (134 aa).

Residues 1–26 (MPTTQQLLRKGRTTLQKKSKVPALKG) form a disordered region. The span at 9-20 (RKGRTTLQKKSK) shows a compositional bias: basic residues. 3-methylthioaspartic acid is present on Asp89. The interval 103–134 (DTQGVKDRNKSRSKYGTKKPKAGAAAAGAKKK) is disordered. The span at 113 to 123 (SRSKYGTKKPK) shows a compositional bias: basic residues. A compositionally biased stretch (low complexity) spans 124–134 (AGAAAAGAKKK).

The protein belongs to the universal ribosomal protein uS12 family. In terms of assembly, part of the 30S ribosomal subunit. Contacts proteins S8 and S17. May interact with IF1 in the 30S initiation complex.

Its function is as follows. With S4 and S5 plays an important role in translational accuracy. In terms of biological role, interacts with and stabilizes bases of the 16S rRNA that are involved in tRNA selection in the A site and with the mRNA backbone. Located at the interface of the 30S and 50S subunits, it traverses the body of the 30S subunit contacting proteins on the other side and probably holding the rRNA structure together. The combined cluster of proteins S8, S12 and S17 appears to hold together the shoulder and platform of the 30S subunit. The protein is Small ribosomal subunit protein uS12 of Deinococcus geothermalis (strain DSM 11300 / CIP 105573 / AG-3a).